A 631-amino-acid polypeptide reads, in one-letter code: Iron transport multicopper oxidase FET3 (631 aa).

Positions 1–25 (MKVSTHHFLPSLLVALWSWATVAQA) are cleaved as a signal peptide. Residues 26–564 (ATHTFNWTTG…ANIPDGFTAK (539 aa)) lie on the Extracellular side of the membrane. Asn-31 and Asn-81 each carry an N-linked (GlcNAc...) asparagine glycan. 2 consecutive Plastocyanin-like domains span residues 50 to 148 (ITCN…LVVE) and 195 to 297 (NLII…LMLN). Residues His-85 and His-87 each coordinate Cu cation. N-linked (GlcNAc...) asparagine glycosylation is found at Asn-92 and Asn-117. His-130 and His-132 together coordinate Cu cation. N-linked (GlcNAc...) asparagine glycosylation is found at Asn-199, Asn-203, Asn-249, Asn-270, Asn-297, Asn-364, and Asn-413. Positions 387–506 (NPLVYGTNTN…QGLALLLIEA (120 aa)) constitute a Plastocyanin-like 3 domain. 7 residues coordinate Cu cation: His-418, His-421, His-423, His-488, Cys-489, His-490, and His-494. A helical transmembrane segment spans residues 565–585 (GIVAMTFSCLAGVLGLISLST). Residues 586-630 (YGLMGVKKSEEEIIRDLGMDPDAVEKVDVSDINSDEDSSRTSKNI) are Cytoplasmic-facing. Positions 610-631 (EKVDVSDINSDEDSSRTSKNIE) are disordered. Basic and acidic residues predominate over residues 622–631 (DSSRTSKNIE).

It belongs to the multicopper oxidase family. The cofactor is Cu cation.

Its subcellular location is the cell membrane. Functionally, iron transport multicopper ferroxidase required for Fe(2+) high affinity uptake. Required to oxidize Fe(2+) and release it from the transporter. Essential component of copper-dependent iron transport. The polypeptide is Iron transport multicopper oxidase FET3 (FET3) (Kluyveromyces lactis (strain ATCC 8585 / CBS 2359 / DSM 70799 / NBRC 1267 / NRRL Y-1140 / WM37) (Yeast)).